The sequence spans 229 residues: Putative 3-methyladenine DNA glycosylase (229 aa).

The protein belongs to the DNA glycosylase MPG family.

The polypeptide is Putative 3-methyladenine DNA glycosylase (Enterococcus faecalis (strain ATCC 700802 / V583)).